Consider the following 129-residue polypeptide: uncharacterized protein (129 aa).

3 consecutive transmembrane segments (helical) span residues 49–69 (LWSL…IVGV), 72–92 (FTIF…NLIF), and 101–118 (YFNC…NLLQ).

It localises to the membrane. This is an uncharacterized protein from Saccharomyces cerevisiae (strain ATCC 204508 / S288c) (Baker's yeast).